Reading from the N-terminus, the 172-residue chain is 3-phenylpropionate/cinnamic acid dioxygenase subunit beta (172 aa).

Belongs to the bacterial ring-hydroxylating dioxygenase beta subunit family. As to quaternary structure, this dioxygenase system consists of four proteins: the two subunits of the hydroxylase component (HcaE and HcaF), a ferredoxin (HcaC) and a ferredoxin reductase (HcaD).

The catalysed reaction is 3-phenylpropanoate + NADH + O2 + H(+) = 3-(cis-5,6-dihydroxycyclohexa-1,3-dien-1-yl)propanoate + NAD(+). It carries out the reaction (E)-cinnamate + NADH + O2 + H(+) = (2E)-3-(cis-5,6-dihydroxycyclohexa-1,3-dien-1-yl)prop-2-enoate + NAD(+). Its pathway is aromatic compound metabolism; 3-phenylpropanoate degradation. Part of the multicomponent 3-phenylpropionate dioxygenase. Converts 3-phenylpropionic acid (PP) and cinnamic acid (CI) into 3-phenylpropionate-dihydrodiol (PP-dihydrodiol) and cinnamic acid-dihydrodiol (CI-dihydrodiol), respectively. The sequence is that of 3-phenylpropionate/cinnamic acid dioxygenase subunit beta from Escherichia coli O17:K52:H18 (strain UMN026 / ExPEC).